Reading from the N-terminus, the 256-residue chain is MVATGGQAQDQSQNQEPDVLNPTSAVTGLPQKRYYRQRAHSNPIADHSFDYPARPEDVDWRSMYPSIQQGQQVSFADVGCGYGGFLVTLGEMFPEKLSIGMEIRVKVSDYVVDRIAALRRRSADTGAYQNIACLRTNAMKYLPNYFSKGQLEKMFFLYPDPHFKRAKHKWRIINQALLSEYAYVLRKGGLVYTMTDVEDLHKWIVTHMEEHPLYERLTEEEANADPITPKLYQSSEEGAKVVRNKGDHFLAIFRRL.

A disordered region spans residues 1 to 25 (MVATGGQAQDQSQNQEPDVLNPTSA). S-adenosyl-L-methionine is bound by residues Gly-79, 102 to 103 (EI), 137 to 138 (NA), and Leu-157. Asp-160 is a catalytic residue. An S-adenosyl-L-methionine-binding site is contributed by 235–237 (SEE).

The protein belongs to the class I-like SAM-binding methyltransferase superfamily. TrmB family.

The protein resides in the nucleus. The catalysed reaction is guanosine(46) in tRNA + S-adenosyl-L-methionine = N(7)-methylguanosine(46) in tRNA + S-adenosyl-L-homocysteine. The protein operates within tRNA modification; N(7)-methylguanine-tRNA biosynthesis. Its function is as follows. Catalyzes the formation of N(7)-methylguanine at position 46 (m7G46) in tRNA. This Drosophila simulans (Fruit fly) protein is tRNA (guanine-N(7)-)-methyltransferase.